The chain runs to 55 residues: ATP synthase F(0) complex subunit 8 (55 aa).

Residues 7 to 24 traverse the membrane as a helical segment; sequence SPWFFIMLTTWLTFSLII.

This sequence belongs to the ATPase protein 8 family. In terms of assembly, component of the ATP synthase complex composed at least of ATP5F1A/subunit alpha, ATP5F1B/subunit beta, ATP5MC1/subunit c (homooctomer), MT-ATP6/subunit a, MT-ATP8/subunit 8, ATP5ME/subunit e, ATP5MF/subunit f, ATP5MG/subunit g, ATP5MK/subunit k, ATP5MJ/subunit j, ATP5F1C/subunit gamma, ATP5F1D/subunit delta, ATP5F1E/subunit epsilon, ATP5PF/subunit F6, ATP5PB/subunit b, ATP5PD/subunit d, ATP5PO/subunit OSCP. ATP synthase complex consists of a soluble F(1) head domain (subunits alpha(3) and beta(3)) - the catalytic core - and a membrane F(0) domain - the membrane proton channel (subunits c, a, 8, e, f, g, k and j). These two domains are linked by a central stalk (subunits gamma, delta, and epsilon) rotating inside the F1 region and a stationary peripheral stalk (subunits F6, b, d, and OSCP).

The protein resides in the mitochondrion membrane. Its function is as follows. Subunit 8, of the mitochondrial membrane ATP synthase complex (F(1)F(0) ATP synthase or Complex V) that produces ATP from ADP in the presence of a proton gradient across the membrane which is generated by electron transport complexes of the respiratory chain. ATP synthase complex consist of a soluble F(1) head domain - the catalytic core - and a membrane F(1) domain - the membrane proton channel. These two domains are linked by a central stalk rotating inside the F(1) region and a stationary peripheral stalk. During catalysis, ATP synthesis in the catalytic domain of F(1) is coupled via a rotary mechanism of the central stalk subunits to proton translocation. In vivo, can only synthesize ATP although its ATP hydrolase activity can be activated artificially in vitro. Part of the complex F(0) domain. The polypeptide is ATP synthase F(0) complex subunit 8 (Columbina passerina (Common ground-dove)).